Reading from the N-terminus, the 370-residue chain is ATP synthase gamma chain, chloroplastic (370 aa).

A chloroplast-targeting transit peptide spans 1–55 (MKFFCVAGLLASAAAFQAQPAAFTTYSPAVGGATSNVFSESSSPAHRNRRATIVM). Residue cysteine 145 is part of the active site.

The protein belongs to the ATPase gamma chain family. In terms of assembly, F-type ATPases have 2 components, CF(1) - the catalytic core - and CF(0) - the membrane proton channel. CF(1) has five subunits: alpha(3), beta(3), gamma(1), delta(1), epsilon(1). CF(0) has four main subunits: a, b, b' and c.

The protein localises to the plastid. Its subcellular location is the chloroplast thylakoid membrane. In terms of biological role, produces ATP from ADP in the presence of a proton gradient across the membrane. The gamma chain is believed to be important in regulating ATPase activity and the flow of protons through the CF(0) complex. This chain is ATP synthase gamma chain, chloroplastic (ATPC), found in Trieres chinensis (Marine centric diatom).